Consider the following 528-residue polypeptide: Peptide chain release factor 3 (528 aa).

The 270-residue stretch at 10-279 (AKRRTFAIIS…GLVEWAPAPM (270 aa)) folds into the tr-type G domain. Residues 19–26 (SHPDAGKT), 87–91 (DTPGH), and 141–144 (NKLD) each bind GTP.

The protein belongs to the TRAFAC class translation factor GTPase superfamily. Classic translation factor GTPase family. PrfC subfamily.

The protein localises to the cytoplasm. Functionally, increases the formation of ribosomal termination complexes and stimulates activities of RF-1 and RF-2. It binds guanine nucleotides and has strong preference for UGA stop codons. It may interact directly with the ribosome. The stimulation of RF-1 and RF-2 is significantly reduced by GTP and GDP, but not by GMP. The polypeptide is Peptide chain release factor 3 (Escherichia coli O1:K1 / APEC).